The chain runs to 64 residues: uncharacterized protein (64 aa).

Its subcellular location is the host cytoplasm. This is an uncharacterized protein from Enterobacteriaceae (Bacteriophage Mu).